The primary structure comprises 107 residues: YcgL domain-containing protein Pcryo_0807 (107 aa).

Residues methionine 1–leucine 95 form the YcgL domain.

This is YcgL domain-containing protein Pcryo_0807 from Psychrobacter cryohalolentis (strain ATCC BAA-1226 / DSM 17306 / VKM B-2378 / K5).